The following is a 219-amino-acid chain: Proteasome subunit beta type-9 (219 aa).

The propeptide at 1-20 is removed in mature form; sequence MLRAGAPTAGSFRTEEVHTG. Thr21 serves as the catalytic Nucleophile. N6-acetyllysine occurs at positions 53 and 109.

Belongs to the peptidase T1B family. The 26S proteasome consists of a 20S proteasome core and two 19S regulatory subunits. The 20S proteasome core is composed of 28 subunits that are arranged in four stacked rings, resulting in a barrel-shaped structure. The two end rings are each formed by seven alpha subunits, and the two central rings are each formed by seven beta subunits. The catalytic chamber with the active sites is on the inside of the barrel. Component of the immunoproteasome, where it displaces the equivalent housekeeping subunit PSMB6. Component of the spermatoproteasome, a form of the proteasome specifically found in testis. Autocleaved. The resulting N-terminal Thr residue of the mature subunit is responsible for the nucleophile proteolytic activity.

The protein localises to the cytoplasm. It localises to the nucleus. The enzyme catalyses Cleavage of peptide bonds with very broad specificity.. The proteasome is a multicatalytic proteinase complex which is characterized by its ability to cleave peptides with Arg, Phe, Tyr, Leu, and Glu adjacent to the leaving group at neutral or slightly basic pH. The proteasome has an ATP-dependent proteolytic activity. This subunit is involved in antigen processing to generate class I binding peptides. The protein is Proteasome subunit beta type-9 (Psmb9) of Mus terricolor (Earth-colored mouse).